Reading from the N-terminus, the 275-residue chain is Large ribosomal subunit protein uL2 (275 aa).

Disordered stretches follow at residues 28–54 (APHA…TRHI) and 223–275 (VAMN…RNKK).

It belongs to the universal ribosomal protein uL2 family. Part of the 50S ribosomal subunit. Forms a bridge to the 30S subunit in the 70S ribosome.

Its function is as follows. One of the primary rRNA binding proteins. Required for association of the 30S and 50S subunits to form the 70S ribosome, for tRNA binding and peptide bond formation. It has been suggested to have peptidyltransferase activity; this is somewhat controversial. Makes several contacts with the 16S rRNA in the 70S ribosome. The chain is Large ribosomal subunit protein uL2 from Saccharophagus degradans (strain 2-40 / ATCC 43961 / DSM 17024).